Reading from the N-terminus, the 177-residue chain is ATP-dependent protease subunit HslV (177 aa).

The active site involves Thr-6. Residues Ser-161, Cys-164, and Thr-167 each contribute to the Na(+) site.

Belongs to the peptidase T1B family. HslV subfamily. In terms of assembly, a double ring-shaped homohexamer of HslV is capped on each side by a ring-shaped HslU homohexamer. The assembly of the HslU/HslV complex is dependent on binding of ATP.

It localises to the cytoplasm. It carries out the reaction ATP-dependent cleavage of peptide bonds with broad specificity.. Allosterically activated by HslU binding. Functionally, protease subunit of a proteasome-like degradation complex believed to be a general protein degrading machinery. In Thermodesulfovibrio yellowstonii (strain ATCC 51303 / DSM 11347 / YP87), this protein is ATP-dependent protease subunit HslV.